We begin with the raw amino-acid sequence, 337 residues long: Phenylalanine--tRNA ligase alpha subunit (337 aa).

Mg(2+) is bound at residue glutamate 252.

The protein belongs to the class-II aminoacyl-tRNA synthetase family. Phe-tRNA synthetase alpha subunit type 1 subfamily. As to quaternary structure, tetramer of two alpha and two beta subunits. Mg(2+) is required as a cofactor.

The protein localises to the cytoplasm. The catalysed reaction is tRNA(Phe) + L-phenylalanine + ATP = L-phenylalanyl-tRNA(Phe) + AMP + diphosphate + H(+). The polypeptide is Phenylalanine--tRNA ligase alpha subunit (Francisella philomiragia subsp. philomiragia (strain ATCC 25017 / CCUG 19701 / FSC 153 / O#319-036)).